The chain runs to 259 residues: Flagellar L-ring protein (259 aa).

Residues Met1–Gly15 form the signal peptide. Residue Cys16 is the site of N-palmitoyl cysteine attachment. Cys16 carries S-diacylglycerol cysteine lipidation.

The protein belongs to the FlgH family. In terms of assembly, the basal body constitutes a major portion of the flagellar organelle and consists of four rings (L,P,S, and M) mounted on a central rod.

Its subcellular location is the cell outer membrane. It is found in the bacterial flagellum basal body. Functionally, assembles around the rod to form the L-ring and probably protects the motor/basal body from shearing forces during rotation. The chain is Flagellar L-ring protein from Vibrio vulnificus (strain YJ016).